Here is a 321-residue protein sequence, read N- to C-terminus: Glucokinase (321 aa).

8 to 13 (GDVGGT) contributes to the ATP binding site.

The protein belongs to the bacterial glucokinase family.

The protein localises to the cytoplasm. It carries out the reaction D-glucose + ATP = D-glucose 6-phosphate + ADP + H(+). This chain is Glucokinase, found in Salmonella heidelberg (strain SL476).